Reading from the N-terminus, the 245-residue chain is 2,3-bisphosphoglycerate-dependent phosphoglycerate mutase (245 aa).

Residues 8-15, 21-22, arginine 60, 87-90, lysine 98, 114-115, and 183-184 each bind substrate; these read RHGQSLWN, TG, ERHY, RR, and GN. Residue histidine 9 is the Tele-phosphohistidine intermediate of the active site. Residue glutamate 87 is the Proton donor/acceptor of the active site.

The protein belongs to the phosphoglycerate mutase family. BPG-dependent PGAM subfamily.

The enzyme catalyses (2R)-2-phosphoglycerate = (2R)-3-phosphoglycerate. Its pathway is carbohydrate degradation; glycolysis; pyruvate from D-glyceraldehyde 3-phosphate: step 3/5. Its function is as follows. Catalyzes the interconversion of 2-phosphoglycerate and 3-phosphoglycerate. The polypeptide is 2,3-bisphosphoglycerate-dependent phosphoglycerate mutase (Bacillus cereus (strain ZK / E33L)).